The following is a 775-amino-acid chain: Subtilisin-like protease SBT1.2 (775 aa).

An N-terminal signal peptide occupies residues 1–20 (MEPKPFFLCIIFLLFCSSSS). Residues 27 to 111 (TYIVQLHPNS…AVRPDHVLQV (85 aa)) form the Inhibitor I9 domain. A Peptidase S8 domain is found at 116–618 (SYKFLGLDGF…AGHVNPQKAI (503 aa)). Residues Asp146 and His222 each act as charge relay system in the active site. Residues 388–470 (GGDKGSEFCL…YTESVLLKAY (83 aa)) form the PA domain. N-linked (GlcNAc...) asparagine glycosylation is found at Asn472 and Asn544. Ser552 serves as the catalytic Charge relay system. Residue Asn652 is glycosylated (N-linked (GlcNAc...) asparagine).

It belongs to the peptidase S8 family. As to expression, mostly expressed in leaves and cotyledons (especially in epidermal cells), and, to a lower extent, in floral buds, stems, and siliques. Strongly expressed in stomatal precursor cells (meristemoids and guard mother cells).

It localises to the secreted. The protein resides in the extracellular space. The protein localises to the apoplast. Its subcellular location is the cell membrane. Serine protease involved in the negative regulation of stomatal density and distribution. Not active on EPFL6 (AC Q1PEY6). Positive regulator of water use efficiency (WUE). This is Subtilisin-like protease SBT1.2 from Arabidopsis thaliana (Mouse-ear cress).